Here is a 279-residue protein sequence, read N- to C-terminus: Pantothenate synthetase (279 aa).

31-38 (MGNLHGGH) contributes to the ATP binding site. His-38 acts as the Proton donor in catalysis. Gln-62 contributes to the (R)-pantoate binding site. Beta-alanine is bound at residue Gln-62. 150 to 153 (GRKD) serves as a coordination point for ATP. Position 156 (Gln-156) interacts with (R)-pantoate. ATP contacts are provided by residues Val-179 and 187–190 (KSSR).

It belongs to the pantothenate synthetase family. As to quaternary structure, homodimer.

It is found in the cytoplasm. It catalyses the reaction (R)-pantoate + beta-alanine + ATP = (R)-pantothenate + AMP + diphosphate + H(+). It functions in the pathway cofactor biosynthesis; (R)-pantothenate biosynthesis; (R)-pantothenate from (R)-pantoate and beta-alanine: step 1/1. In terms of biological role, catalyzes the condensation of pantoate with beta-alanine in an ATP-dependent reaction via a pantoyl-adenylate intermediate. This Stenotrophomonas maltophilia (strain K279a) protein is Pantothenate synthetase.